The following is a 129-amino-acid chain: Ribosome-binding factor A (129 aa).

The protein belongs to the RbfA family. In terms of assembly, monomer. Binds 30S ribosomal subunits, but not 50S ribosomal subunits or 70S ribosomes.

The protein resides in the cytoplasm. In terms of biological role, one of several proteins that assist in the late maturation steps of the functional core of the 30S ribosomal subunit. Associates with free 30S ribosomal subunits (but not with 30S subunits that are part of 70S ribosomes or polysomes). Required for efficient processing of 16S rRNA. May interact with the 5'-terminal helix region of 16S rRNA. The sequence is that of Ribosome-binding factor A from Thioalkalivibrio sulfidiphilus (strain HL-EbGR7).